Here is a 546-residue protein sequence, read N- to C-terminus: Major facilitator superfamily transporter MPN_077 (546 aa).

12 helical membrane passes run 2-22, 62-82, 88-108, 179-199, 220-240, 248-268, 305-325, 344-364, 377-397, 401-421, 442-462, and 485-505; these read WGLVLLGYVLFVIEWFVIDFI, WTITLLRAVGSILCGVMVVKF, VMIMMGLMCVCFPFLIIGSPL, AFFIIFRSTIAIGGTTLIAYA, FWGFNVGLVIVAAPFLIPGVG, VWVVTFMILLVFAMLLVFAWF, LLAIAGVGTILLINPLTQTWF, PILLILWVMGYLLGYFLLSPF, FIFTANAVLVLLIVIFAATLG, VVGFTFVGIFTFIAGGFGWSL, IIFGYVWGFAYVFYSIFDIIT, and IAAIVLFVSLLLVINWVIIYL.

Belongs to the major facilitator superfamily.

It localises to the cell membrane. This chain is Major facilitator superfamily transporter MPN_077, found in Mycoplasma pneumoniae (strain ATCC 29342 / M129 / Subtype 1) (Mycoplasmoides pneumoniae).